Consider the following 201-residue polypeptide: tRNA (guanine-N(7)-)-methyltransferase (201 aa).

Residues E33, E58, D85, and D106 each contribute to the S-adenosyl-L-methionine site. Residue D106 is part of the active site. Substrate-binding positions include K110, D142, and 180–183 (TTYE).

This sequence belongs to the class I-like SAM-binding methyltransferase superfamily. TrmB family.

It carries out the reaction guanosine(46) in tRNA + S-adenosyl-L-methionine = N(7)-methylguanosine(46) in tRNA + S-adenosyl-L-homocysteine. It participates in tRNA modification; N(7)-methylguanine-tRNA biosynthesis. Its function is as follows. Catalyzes the formation of N(7)-methylguanine at position 46 (m7G46) in tRNA. The sequence is that of tRNA (guanine-N(7)-)-methyltransferase from Mesomycoplasma hyopneumoniae (strain 7448) (Mycoplasma hyopneumoniae).